Reading from the N-terminus, the 345-residue chain is UPF0324 membrane protein RB0971 (345 aa).

10 consecutive transmembrane segments (helical) span residues 13–32 (SLSV…AAVA), 42–61 (YGAP…HFLA), 93–115 (LLIG…TILF), 130–152 (ALLT…AAVL), 161–183 (NLIF…YPIV), 193–215 (ATGI…GFSV), 228–247 (LIRV…VLRS), 262–284 (VPGF…VPVL), 291–310 (AISR…KTSL), and 320–342 (AVAL…MYYL).

The protein belongs to the UPF0324 family.

Its subcellular location is the cell membrane. The chain is UPF0324 membrane protein RB0971 from Rhizobium meliloti (strain 1021) (Ensifer meliloti).